Here is a 338-residue protein sequence, read N- to C-terminus: Anthranilate phosphoribosyltransferase (338 aa).

Residues Gly-81, 84 to 85 (GD), Thr-89, 91 to 94 (NIST), 109 to 117 (KHGNRGVSS), and Ser-121 each bind 5-phospho-alpha-D-ribose 1-diphosphate. Position 81 (Gly-81) interacts with anthranilate. Mg(2+) is bound at residue Ser-93. Asn-112 is a binding site for anthranilate. Anthranilate is bound at residue Arg-167. Asp-225 and Glu-226 together coordinate Mg(2+).

The protein belongs to the anthranilate phosphoribosyltransferase family. As to quaternary structure, homodimer. The cofactor is Mg(2+).

The enzyme catalyses N-(5-phospho-beta-D-ribosyl)anthranilate + diphosphate = 5-phospho-alpha-D-ribose 1-diphosphate + anthranilate. It participates in amino-acid biosynthesis; L-tryptophan biosynthesis; L-tryptophan from chorismate: step 2/5. In terms of biological role, catalyzes the transfer of the phosphoribosyl group of 5-phosphorylribose-1-pyrophosphate (PRPP) to anthranilate to yield N-(5'-phosphoribosyl)-anthranilate (PRA). The polypeptide is Anthranilate phosphoribosyltransferase (Methanoculleus marisnigri (strain ATCC 35101 / DSM 1498 / JR1)).